We begin with the raw amino-acid sequence, 170 residues long: Putative 5'(3')-deoxyribonucleotidase (170 aa).

Asp28 serves as the catalytic Nucleophile. 3 residues coordinate Mg(2+): Asp28, Asp30, and Asp134. The active-site Proton donor is the Asp30.

The protein belongs to the 5'(3')-deoxyribonucleotidase family. The cofactor is Mg(2+).

Dephosphorylates the 5' and 2'(3')-phosphates of deoxyribonucleotides. The protein is Putative 5'(3')-deoxyribonucleotidase of Vibrio parahaemolyticus (KVP40).